The chain runs to 251 residues: Triosephosphate isomerase (251 aa).

Asn9 to Lys11 is a binding site for substrate. His95 (electrophile) is an active-site residue. Glu167 serves as the catalytic Proton acceptor. Residues Gly173, Ser213, and Gly234–Gly235 each bind substrate.

This sequence belongs to the triosephosphate isomerase family. In terms of assembly, homodimer.

Its subcellular location is the cytoplasm. The enzyme catalyses D-glyceraldehyde 3-phosphate = dihydroxyacetone phosphate. Its pathway is carbohydrate biosynthesis; gluconeogenesis. The protein operates within carbohydrate degradation; glycolysis; D-glyceraldehyde 3-phosphate from glycerone phosphate: step 1/1. Involved in the gluconeogenesis. Catalyzes stereospecifically the conversion of dihydroxyacetone phosphate (DHAP) to D-glyceraldehyde-3-phosphate (G3P). This is Triosephosphate isomerase from Carboxydothermus hydrogenoformans (strain ATCC BAA-161 / DSM 6008 / Z-2901).